Here is a 1370-residue protein sequence, read N- to C-terminus: Major capsid protein (1370 aa).

It belongs to the herpesviridae major capsid protein family. Homomultimer. Makes the hexons and eleven out of twelve pentons. Interacts with triplex proteins 1/TRX1 and 2/TRX2; adjacent capsomers are linked together in groups of three by triplexes, heterotrimeric complexes composed of one molecule of TRX1 and two molecules of TRX2. Interacts with scaffold protein; this interaction allows efficient MCP transport to the host nucleus. Interacts with capsid vertex component 2/CVC2. Interacts with the small capsomere-interacting protein/SCP.

The protein localises to the virion. Its subcellular location is the host nucleus. Functionally, self-assembles to form an icosahedral capsid with a T=16 symmetry, about 200 nm in diameter, and consisting of 150 hexons and 12 pentons (total of 162 capsomers). Hexons form the edges and faces of the capsid and are each composed of six MCP molecules. In contrast, one penton is found at each of the 12 vertices. Eleven of the pentons are MCP pentamers, while the last vertex is occupied by the portal complex. The capsid is surrounded by a layer of proteinaceous material designated the tegument which, in turn, is enclosed in an envelope of host cell-derived lipids containing virus-encoded glycoproteins. In Human cytomegalovirus (strain AD169) (HHV-5), this protein is Major capsid protein.